The sequence spans 1004 residues: Putative helicase MOV-10 (1004 aa).

At Lys148 the chain carries N6-acetyllysine. Thr254 is modified (phosphothreonine). Ser433 carries the post-translational modification Phosphoserine. Residue 525 to 532 (GPPGTGKT) coordinates ATP. The DEAG box signature appears at 646–649 (DEAG). The interval 922 to 966 (NPLLLGHDPDWKTFLEFCKENGGYTGCPFPAKLDLQQGQDLLQGL) is interaction with AGO2 and APOBEC3G. The disordered stretch occupies residues 966–1004 (LSKLSPSTSGPRRHQNLPQEREGEGGLPLQVEPEWRNEL). At Ser970 the chain carries Phosphoserine.

It belongs to the DNA2/NAM7 helicase family. SDE3 subfamily. In terms of assembly, interacts with DICER1, AGO2, TARBP2, EIF6 and RPL7A (60S ribosome subunit); they form a large RNA-induced silencing complex (RISC). Interacts with APOBEC3G in an RNA-dependent manner. Interacts with TRIM71 (via NHL repeats) in an RNA-dependent manner. Interacts with both protein products of LIRE1, ORF1p and ORF2p. Interacts with TUT4 and, to a lesser extent, TUT7; the interactions are RNA-dependent. Interacts with AGO2, TNRC6B and UPF1; the interactions are direct and RNA-dependent. Interacts with FMR1; this interaction is direct, occurs in an RNA-dependent manner on polysomes and induces association of MOV10 with RNAs. Interacts with SHFL; the interaction increases in presence of RNA. Interacts with DHX34; the interaction is RNA-independent. Interacts with RBM46. Ubiquitinated by the DCX(DCAF12) complex that specifically recognizes the glutamate-leucine (Glu-Leu) degron at the C-terminus, leading to its degradation.

It localises to the cytoplasm. The protein localises to the P-body. Its subcellular location is the nucleus. It is found in the cytoplasmic ribonucleoprotein granule. The protein resides in the stress granule. It carries out the reaction ATP + H2O = ADP + phosphate + H(+). Functionally, 5' to 3' RNA helicase that is involved in a number of cellular roles ranging from mRNA metabolism and translation, modulation of viral infectivity, inhibition of retrotransposition, or regulation of synaptic transmission. Plays an important role in innate antiviral immunity by promoting type I interferon production. Mechanistically, specifically uses IKKepsilon/IKBKE as the mediator kinase for IRF3 activation. Contributes to UPF1 mRNA target degradation by translocation along 3' UTRs. Required for microRNA (miRNA)-mediated gene silencing by the RNA-induced silencing complex (RISC). Required for both miRNA-mediated translational repression and miRNA-mediated cleavage of complementary mRNAs by RISC. In cooperation with FMR1, regulates miRNA-mediated translational repression by AGO2. Restricts retrotransposition of long interspersed element-1 (LINE-1) in cooperation with TUT4 and TUT7 counteracting the RNA chaperonne activity of L1RE1. Facilitates LINE-1 uridylation by TUT4 and TUT7. Required for embryonic viability and for normal central nervous system development and function. Plays two critical roles in early brain development: suppresses retroelements in the nucleus by directly inhibiting cDNA synthesis, while regulates cytoskeletal mRNAs to influence neurite outgrowth in the cytosol. May function as a messenger ribonucleoprotein (mRNP) clearance factor. The protein is Putative helicase MOV-10 (Mov10) of Mus musculus (Mouse).